We begin with the raw amino-acid sequence, 307 residues long: tRNA dimethylallyltransferase 1 (307 aa).

10 to 17 (GPTASGKT) lines the ATP pocket. 12 to 17 (TASGKT) lines the substrate pocket. Positions 35–38 (DSRQ) are interaction with substrate tRNA.

The protein belongs to the IPP transferase family. In terms of assembly, monomer. It depends on Mg(2+) as a cofactor.

It carries out the reaction adenosine(37) in tRNA + dimethylallyl diphosphate = N(6)-dimethylallyladenosine(37) in tRNA + diphosphate. In terms of biological role, catalyzes the transfer of a dimethylallyl group onto the adenine at position 37 in tRNAs that read codons beginning with uridine, leading to the formation of N6-(dimethylallyl)adenosine (i(6)A). The sequence is that of tRNA dimethylallyltransferase 1 from Geotalea daltonii (strain DSM 22248 / JCM 15807 / FRC-32) (Geobacter daltonii).